Reading from the N-terminus, the 339-residue chain is D-erythrose-4-phosphate dehydrogenase (339 aa).

NAD(+) contacts are provided by residues 12-13 (RI) and Arg-81. Residues 154–156 (SCT), Arg-200, 213–214 (TR), and Arg-236 contribute to the substrate site. Cys-155 acts as the Nucleophile in catalysis. Asn-318 is a binding site for NAD(+).

It belongs to the glyceraldehyde-3-phosphate dehydrogenase family. Epd subfamily. In terms of assembly, homotetramer.

The protein resides in the cytoplasm. It catalyses the reaction D-erythrose 4-phosphate + NAD(+) + H2O = 4-phospho-D-erythronate + NADH + 2 H(+). The protein operates within cofactor biosynthesis; pyridoxine 5'-phosphate biosynthesis; pyridoxine 5'-phosphate from D-erythrose 4-phosphate: step 1/5. Its function is as follows. Catalyzes the NAD-dependent conversion of D-erythrose 4-phosphate to 4-phosphoerythronate. The sequence is that of D-erythrose-4-phosphate dehydrogenase from Cronobacter sakazakii (strain ATCC BAA-894) (Enterobacter sakazakii).